A 43-amino-acid chain; its full sequence is Protein PsbN (43 aa).

The chain crosses the membrane as a helical span at residues 7 to 29 (ITIFLSGLLVSFTGYALYTAFGQ).

The protein belongs to the PsbN family.

Its subcellular location is the plastid membrane. Its function is as follows. May play a role in photosystem I and II biogenesis. This chain is Protein PsbN, found in Cuscuta reflexa (Southern Asian dodder).